The chain runs to 436 residues: 3-ketoacyl-CoA thiolase (436 aa).

The Acyl-thioester intermediate role is filled by Cys99. Catalysis depends on proton acceptor residues His392 and Cys422.

This sequence belongs to the thiolase-like superfamily. Thiolase family. In terms of assembly, heterotetramer of two alpha chains (FadJ) and two beta chains (FadI).

It localises to the cytoplasm. It carries out the reaction an acyl-CoA + acetyl-CoA = a 3-oxoacyl-CoA + CoA. It functions in the pathway lipid metabolism; fatty acid beta-oxidation. Catalyzes the final step of fatty acid oxidation in which acetyl-CoA is released and the CoA ester of a fatty acid two carbons shorter is formed. In Salmonella heidelberg (strain SL476), this protein is 3-ketoacyl-CoA thiolase.